Here is an 82-residue protein sequence, read N- to C-terminus: Acyl carrier protein (82 aa).

Residues 2–77 (DNVADRVKKV…QAIDYVSAHI (76 aa)) form the Carrier domain. At S37 the chain carries O-(pantetheine 4'-phosphoryl)serine.

This sequence belongs to the acyl carrier protein (ACP) family. 4'-phosphopantetheine is transferred from CoA to a specific serine of apo-ACP by AcpS. This modification is essential for activity because fatty acids are bound in thioester linkage to the sulfhydryl of the prosthetic group.

The protein localises to the cytoplasm. Its pathway is lipid metabolism; fatty acid biosynthesis. Its function is as follows. Carrier of the growing fatty acid chain in fatty acid biosynthesis. The sequence is that of Acyl carrier protein from Acidithiobacillus ferrooxidans (strain ATCC 23270 / DSM 14882 / CIP 104768 / NCIMB 8455) (Ferrobacillus ferrooxidans (strain ATCC 23270)).